A 224-amino-acid chain; its full sequence is UPF0758 protein VFMJ11_0123 (224 aa).

The MPN domain occupies 102 to 224 (ALTSPEHTKR…IVSFAERGWI (123 aa)). Zn(2+) is bound by residues H173, H175, and D186. Positions 173-186 (HNHPSGVAEPSQAD) match the JAMM motif motif.

It belongs to the UPF0758 family.

The chain is UPF0758 protein VFMJ11_0123 from Aliivibrio fischeri (strain MJ11) (Vibrio fischeri).